The following is a 93-amino-acid chain: Alpha-defensin 13 (93 aa).

The first 19 residues, 1–19 (MKTLVLLSALVLLAFQVQA), serve as a signal peptide directing secretion. The propeptide occupies 20 to 58 (DPIQNTDEETKTEEQPGEEDQAVSVSFGDPEGTSLQEES). The interval 22–54 (IQNTDEETKTEEQPGEEDQAVSVSFGDPEGTSL) is disordered. Intrachain disulfides connect cysteine 64/cysteine 92, cysteine 66/cysteine 81, and cysteine 71/cysteine 91.

This sequence belongs to the alpha-defensin family. Paneth cells of the small bowel.

Its subcellular location is the secreted. In terms of biological role, probably contributes to the antimicrobial barrier function of the small bowel mucosa. This chain is Alpha-defensin 13 (Defa13), found in Mus musculus (Mouse).